Consider the following 399-residue polypeptide: Methylthioribose kinase (399 aa).

ATP contacts are provided by residues Asn40, Lys57, and 111–113 (EDL). Asp229 contacts substrate. Residue 246-248 (DAE) participates in ATP binding. Position 344 (Arg344) interacts with substrate.

Belongs to the methylthioribose kinase family. In terms of assembly, homodimer.

The enzyme catalyses 5-(methylsulfanyl)-D-ribose + ATP = 5-(methylsulfanyl)-alpha-D-ribose 1-phosphate + ADP + H(+). The protein operates within amino-acid biosynthesis; L-methionine biosynthesis via salvage pathway; S-methyl-5-thio-alpha-D-ribose 1-phosphate from S-methyl-5'-thioadenosine (hydrolase route): step 2/2. Catalyzes the phosphorylation of methylthioribose into methylthioribose-1-phosphate. In Klebsiella pneumoniae (strain 342), this protein is Methylthioribose kinase.